We begin with the raw amino-acid sequence, 109 residues long: FAD assembly factor SdhE (109 aa).

The disordered stretch occupies residues 1–22 (MQDNFTASSPSSSSSASGVAED). The span at 7–17 (ASSPSSSSSAS) shows a compositional bias: low complexity.

Belongs to the SdhE FAD assembly factor family.

Its subcellular location is the cytoplasm. Functionally, an FAD assembly protein, which accelerates covalent attachment of the cofactor into other proteins. Plays an essential role in the assembly of succinate dehydrogenase (SDH, respiratory complex II), an enzyme complex that is a component of both the tricarboxylic acid cycle and the electron transport chain, and which couples the oxidation of succinate to fumarate with the reduction of ubiquinone (coenzyme Q) to ubiquinol. Required for flavinylation of SdhA, when the SDH operon and this gene are overexpressed in G.oxydans. Flavinylation of SdhA is detected only in the presence of sdhE. The protein is FAD assembly factor SdhE of Acetobacter pasteurianus (strain NBRC 105184 / IFO 3283-01).